We begin with the raw amino-acid sequence, 391 residues long: 3-ketoacyl-CoA thiolase, peroxisomal (391 aa).

Cysteine 92 serves as the catalytic Acyl-thioester intermediate. Catalysis depends on proton acceptor residues histidine 335 and cysteine 366.

Belongs to the thiolase-like superfamily. Thiolase family. As to quaternary structure, homodimer.

It localises to the peroxisome. It catalyses the reaction an acyl-CoA + acetyl-CoA = a 3-oxoacyl-CoA + CoA. The protein operates within lipid metabolism; fatty acid metabolism. This chain is 3-ketoacyl-CoA thiolase, peroxisomal (FOX3), found in Encephalitozoon cuniculi (strain GB-M1) (Microsporidian parasite).